The sequence spans 131 residues: Small ribosomal subunit protein uS19 (131 aa).

Belongs to the universal ribosomal protein uS19 family.

In terms of biological role, protein S19 forms a complex with S13 that binds strongly to the 16S ribosomal RNA. In Nitrosopumilus maritimus (strain SCM1), this protein is Small ribosomal subunit protein uS19.